Here is a 378-residue protein sequence, read N- to C-terminus: Ribosomal RNA large subunit methyltransferase G (378 aa).

It belongs to the methyltransferase superfamily. RlmG family.

Its subcellular location is the cytoplasm. The enzyme catalyses guanosine(1835) in 23S rRNA + S-adenosyl-L-methionine = N(2)-methylguanosine(1835) in 23S rRNA + S-adenosyl-L-homocysteine + H(+). Specifically methylates the guanine in position 1835 (m2G1835) of 23S rRNA. The polypeptide is Ribosomal RNA large subunit methyltransferase G (Enterobacter sp. (strain 638)).